A 653-amino-acid polypeptide reads, in one-letter code: Glyceraldehyde-3-phosphate:ferredoxin oxidoreductase (653 aa).

Positions 70, 89, 196, 197, 199, and 206 each coordinate tungstopterin. [4Fe-4S] cluster contacts are provided by Cys333 and Cys337. The tungstopterin site is built by Asp378, Asp383, and Asp544. A [4Fe-4S] cluster-binding site is contributed by Cys549.

This sequence belongs to the AOR/FOR family. As to quaternary structure, monomer. [4Fe-4S] cluster is required as a cofactor. Requires tungstopterin as cofactor.

It carries out the reaction D-glyceraldehyde 3-phosphate + 2 oxidized [2Fe-2S]-[ferredoxin] + H2O = (2R)-3-phosphoglycerate + 2 reduced [2Fe-2S]-[ferredoxin] + 3 H(+). Sensitive to oxygen. Activity increased by 58%-93% in the presence of acetyl phosphate, 3-phosphoglycerate or 2,3-bisphosphoglycerate at 10 mM concentration. Inhibited by up to 25% in the presence of crotonaldehyde or formaldehyde at 10 mM concentration. Inhibited by up to 50% by sodium dithionate. 3.5-fold increase in activity observed by addition of potassium phosphate or sodium arsenate at 200 mM concentration. Activity enhanced by potassium chloride, sodium citrate or sodium sulfate at 200 mM concentration. In terms of biological role, catalyzes the oxidation of glyceraldehyde-3-phosphate to 3-phosphoglycerate. Uses ferredoxin as electron acceptor. In vitro can also use benzyl viologen, but not NADP or NAD, as electron acceptor. Probably acts as a glycolytic enzyme in place of glyceraldehyde-3-phosphate dehydrogenase (GAPDH) and phosphoglycerate kinase (PGK) in an unusual Emden-Meyerhof glycolysis. The chain is Glyceraldehyde-3-phosphate:ferredoxin oxidoreductase from Pyrococcus furiosus (strain ATCC 43587 / DSM 3638 / JCM 8422 / Vc1).